Here is a 1148-residue protein sequence, read N- to C-terminus: Autophagy-related protein 11 (1148 aa).

Residues 567 to 570 (FDDI) carry the AIM (Atg8-family-interacting motif) motif. Over residues 699-710 (KAEASSDVEGNK) the composition is skewed to basic and acidic residues. Disordered stretches follow at residues 699 to 727 (KAEA…CVSN), 754 to 777 (PLDS…EAGE), and 784 to 803 (NSST…ATGR). Polar residues-rich tracts occupy residues 754 to 767 (PLDS…QNNE) and 784 to 793 (NSSTAESPQK). 2 coiled-coil regions span residues 816-868 (ELRN…HLEN) and 956-996 (DKVS…VKTL). Threonine 851 bears the Phosphothreonine mark. An AIM (Atg8-family-interacting motif) motif is present at residues 1130-1133 (YFIV).

Belongs to the ATG11 family. Homodimer. Interacts with ATG8E, ATG13A and ATG101. Binds to ATG8E on autophagic vesicles.

It is found in the cytoplasmic vesicle. The protein localises to the autophagosome. In terms of biological role, accessory protein involved in autophagy. Acts as a scaffold protein of the ATG1-ATG13 complex for faithful delivery of autophagic vesicles to the vacuole. Involved in the stress-induced phosphorylation of ATG1A for turnover of ATG1-ATG13 complex and proper ATG1-ATG13 complex assembly or activity. Required for selective mitophagy. Required for senescence-induced breakdown of mitochondria-resident proteins and mitochondrial vesicles. Seems not essential for ATG8-mediated autophagy. This is Autophagy-related protein 11 from Arabidopsis thaliana (Mouse-ear cress).